Consider the following 176-residue polypeptide: Shikimate kinase (176 aa).

14–19 (GAGKSS) serves as a coordination point for ATP. A Mg(2+)-binding site is contributed by Ser18. The substrate site is built by Asp36, Arg60, and Gly82. Residue Arg120 coordinates ATP. Residue Arg138 coordinates substrate.

Belongs to the shikimate kinase family. In terms of assembly, monomer. It depends on Mg(2+) as a cofactor.

It is found in the cytoplasm. It carries out the reaction shikimate + ATP = 3-phosphoshikimate + ADP + H(+). It functions in the pathway metabolic intermediate biosynthesis; chorismate biosynthesis; chorismate from D-erythrose 4-phosphate and phosphoenolpyruvate: step 5/7. Catalyzes the specific phosphorylation of the 3-hydroxyl group of shikimic acid using ATP as a cosubstrate. In Dehalococcoides mccartyi (strain ATCC BAA-2100 / JCM 16839 / KCTC 5957 / BAV1), this protein is Shikimate kinase.